Reading from the N-terminus, the 260-residue chain is Ubiquinone/menaquinone biosynthesis C-methyltransferase UbiE (260 aa).

Residues threonine 83, aspartate 104, 132-133, and serine 149 contribute to the S-adenosyl-L-methionine site; that span reads NA.

This sequence belongs to the class I-like SAM-binding methyltransferase superfamily. MenG/UbiE family.

It carries out the reaction a 2-demethylmenaquinol + S-adenosyl-L-methionine = a menaquinol + S-adenosyl-L-homocysteine + H(+). The catalysed reaction is a 2-methoxy-6-(all-trans-polyprenyl)benzene-1,4-diol + S-adenosyl-L-methionine = a 5-methoxy-2-methyl-3-(all-trans-polyprenyl)benzene-1,4-diol + S-adenosyl-L-homocysteine + H(+). It functions in the pathway quinol/quinone metabolism; menaquinone biosynthesis; menaquinol from 1,4-dihydroxy-2-naphthoate: step 2/2. It participates in cofactor biosynthesis; ubiquinone biosynthesis. Methyltransferase required for the conversion of demethylmenaquinol (DMKH2) to menaquinol (MKH2) and the conversion of 2-polyprenyl-6-methoxy-1,4-benzoquinol (DDMQH2) to 2-polyprenyl-3-methyl-6-methoxy-1,4-benzoquinol (DMQH2). In Vibrio cholerae serotype O1 (strain ATCC 39315 / El Tor Inaba N16961), this protein is Ubiquinone/menaquinone biosynthesis C-methyltransferase UbiE.